Here is a 356-residue protein sequence, read N- to C-terminus: Tyrosine recombinase XerS (356 aa).

The Core-binding (CB) domain maps to 16–121 (IMPWFVLDYY…ALSSLYKYLT (106 aa)). Positions 169 to 354 (EFLDYVDCEY…VNDEQKNALD (186 aa)) constitute a Tyr recombinase domain. Catalysis depends on residues arginine 210, lysine 234, histidine 306, arginine 309, and histidine 332. Tyrosine 341 acts as the O-(3'-phospho-DNA)-tyrosine intermediate in catalysis.

It belongs to the 'phage' integrase family. XerS subfamily.

The protein localises to the cytoplasm. FtsK is required for recombination. Functionally, site-specific tyrosine recombinase, which acts by catalyzing the cutting and rejoining of the recombining DNA molecules. Essential to convert dimers of the bacterial chromosome into monomers to permit their segregation at cell division. The polypeptide is Tyrosine recombinase XerS (Streptococcus uberis (strain ATCC BAA-854 / 0140J)).